The chain runs to 297 residues: Acetyl-coenzyme A carboxylase carboxyl transferase subunit beta (297 aa).

One can recognise a CoA carboxyltransferase N-terminal domain in the interval 27 to 296 (LWHKCPSCEA…PEEAREAAAV (270 aa)). Zn(2+) is bound by residues Cys31, Cys34, Cys50, and Cys53. The segment at 31–53 (CPSCEAVLYRPELEKTLDVCPKC) adopts a C4-type zinc-finger fold.

It belongs to the AccD/PCCB family. As to quaternary structure, acetyl-CoA carboxylase is a heterohexamer composed of biotin carboxyl carrier protein (AccB), biotin carboxylase (AccC) and two subunits each of ACCase subunit alpha (AccA) and ACCase subunit beta (AccD). Zn(2+) is required as a cofactor.

The protein resides in the cytoplasm. It catalyses the reaction N(6)-carboxybiotinyl-L-lysyl-[protein] + acetyl-CoA = N(6)-biotinyl-L-lysyl-[protein] + malonyl-CoA. Its pathway is lipid metabolism; malonyl-CoA biosynthesis; malonyl-CoA from acetyl-CoA: step 1/1. Its function is as follows. Component of the acetyl coenzyme A carboxylase (ACC) complex. Biotin carboxylase (BC) catalyzes the carboxylation of biotin on its carrier protein (BCCP) and then the CO(2) group is transferred by the transcarboxylase to acetyl-CoA to form malonyl-CoA. This is Acetyl-coenzyme A carboxylase carboxyl transferase subunit beta from Pseudomonas putida (strain ATCC 700007 / DSM 6899 / JCM 31910 / BCRC 17059 / LMG 24140 / F1).